Consider the following 294-residue polypeptide: Cyclin-G1 (294 aa).

Belongs to the cyclin family. Cyclin G subfamily. Binds to B' regulatory B subunits of protein phosphatase A (PP2A) following induction by p53 (in vitro). In terms of tissue distribution, highest levels in kidney, heart and skeletal muscle.

It localises to the nucleus. Functionally, may play a role in growth regulation. Is associated with G2/M phase arrest in response to DNA damage. May be an intermediate by which p53 mediates its role as an inhibitor of cellular proliferation. In Mus musculus (Mouse), this protein is Cyclin-G1 (Ccng1).